The following is a 130-amino-acid chain: Small ribosomal subunit protein uS8 (130 aa).

This sequence belongs to the universal ribosomal protein uS8 family. Part of the 30S ribosomal subunit.

Functionally, one of the primary rRNA binding proteins, it binds directly to 16S rRNA central domain where it helps coordinate assembly of the platform of the 30S subunit. The protein is Small ribosomal subunit protein uS8 of Methanotorris igneus (Methanococcus igneus).